The chain runs to 294 residues: Cytidine deaminase (294 aa).

CMP/dCMP-type deaminase domains are found at residues 48 to 168 (DEDA…FGPK) and 186 to 294 (LTGD…VLLG). 89 to 91 (NME) lines the substrate pocket. His102 is a binding site for Zn(2+). Catalysis depends on Glu104, which acts as the Proton donor. 2 residues coordinate Zn(2+): Cys129 and Cys132.

Belongs to the cytidine and deoxycytidylate deaminase family. As to quaternary structure, homodimer. The cofactor is Zn(2+).

The catalysed reaction is cytidine + H2O + H(+) = uridine + NH4(+). It catalyses the reaction 2'-deoxycytidine + H2O + H(+) = 2'-deoxyuridine + NH4(+). Its function is as follows. This enzyme scavenges exogenous and endogenous cytidine and 2'-deoxycytidine for UMP synthesis. The protein is Cytidine deaminase of Salmonella enteritidis PT4 (strain P125109).